The chain runs to 114 residues: Amphinase-4 (114 aa).

The active-site Proton acceptor is His-15. 4 disulfide bridges follow: Cys-26/Cys-79, Cys-41/Cys-85, Cys-59/Cys-100, and Cys-97/Cys-114. Asn-27 is a glycosylation site (N-linked (GlcNAc...) asparagine). 42 to 46 is a binding site for substrate; sequence KPVNT. Asn-67 and Asn-91 each carry an N-linked (GlcNAc...) asparagine glycan. His-107 (proton donor) is an active-site residue.

It belongs to the pancreatic ribonuclease family. As to quaternary structure, monomer. There are at least five different forms arising from glycan heterogeneity.

The protein resides in the secreted. In terms of biological role, endonuclease, hydrolyzes highly polymerized RNA, poly(U) and poly(C), and the dinucleotides CpA and UpA. Hydrolyzes rCA, rUA and rUG. Has cytotoxic activity against cultured human submaxillary gland carcinoma cells. The sequence is that of Amphinase-4 from Lithobates pipiens (Northern leopard frog).